Reading from the N-terminus, the 127-residue chain is Small ribosomal subunit protein bS6 (127 aa).

Residues 104 to 127 (QGAEKGKSSRKEKVAAEAEASEEA) are disordered. A compositionally biased stretch (basic and acidic residues) spans 107–119 (EKGKSSRKEKVAA).

This sequence belongs to the bacterial ribosomal protein bS6 family.

Functionally, binds together with bS18 to 16S ribosomal RNA. This Coxiella burnetii (strain CbuG_Q212) (Coxiella burnetii (strain Q212)) protein is Small ribosomal subunit protein bS6.